Consider the following 303-residue polypeptide: Glutathione transport system permease protein GsiD (303 aa).

The next 6 helical transmembrane spans lie at 40–60 (AMTAALFVILLIVVAIFARWI), 105–125 (LAAGVFAVFIGAAIGTLLGLL), 144–164 (LFAFPGILLAIAVVAVLGSGI), 165–185 (ANVIIAVAIFSIPAFARLVRG), 222–242 (IVVFFTMRIGTSIISAASLSF), and 266–286 (VIAPHVAVFPVLAIFLTVLAF). An ABC transmembrane type-1 domain is found at 101–290 (AQISLAAGVF…LTVLAFNLLG (190 aa)).

This sequence belongs to the binding-protein-dependent transport system permease family. The complex is composed of two ATP-binding proteins (GsiA), two transmembrane proteins (GsiC and GsiD) and a solute-binding protein (GsiB).

The protein resides in the cell inner membrane. Functionally, part of the ABC transporter complex GsiABCD involved in glutathione import. Probably responsible for the translocation of the substrate across the membrane. The polypeptide is Glutathione transport system permease protein GsiD (Shigella dysenteriae serotype 1 (strain Sd197)).